The sequence spans 28 residues: Metallothionein-like protein type 2 LSC210 (28 aa).

Belongs to the metallothionein superfamily. Type 15 family.

In terms of biological role, metallothioneins have a high content of cysteine residues that bind various heavy metals. The chain is Metallothionein-like protein type 2 LSC210 (LSC210) from Brassica napus (Rape).